Here is a 153-residue protein sequence, read N- to C-terminus: Conglutin delta 2 (153 aa).

The N-terminal stretch at 1–22 (MAKLTILIALVAALVLVVHTSA) is a signal peptide. Intrachain disulfides connect C30-C102, C42-C90, C91-C138, and C104-C146.

This sequence belongs to the 2S seed storage albumins family. Heterodimer of a small chain and a large chain; disulfide-linked. As to expression, expressed in developing cotyledons (at protein level).

The protein localises to the endoplasmic reticulum. The protein is Conglutin delta 2 of Lupinus angustifolius (Narrow-leaved blue lupine).